The sequence spans 314 residues: Methionyl-tRNA formyltransferase (314 aa).

Position 112–115 (112–115 (SLLP)) interacts with (6S)-5,6,7,8-tetrahydrofolate.

The protein belongs to the Fmt family.

The enzyme catalyses L-methionyl-tRNA(fMet) + (6R)-10-formyltetrahydrofolate = N-formyl-L-methionyl-tRNA(fMet) + (6S)-5,6,7,8-tetrahydrofolate + H(+). Its function is as follows. Attaches a formyl group to the free amino group of methionyl-tRNA(fMet). The formyl group appears to play a dual role in the initiator identity of N-formylmethionyl-tRNA by promoting its recognition by IF2 and preventing the misappropriation of this tRNA by the elongation apparatus. This Tolumonas auensis (strain DSM 9187 / NBRC 110442 / TA 4) protein is Methionyl-tRNA formyltransferase.